Here is a 452-residue protein sequence, read N- to C-terminus: MDDIFTQCREGNAVAVRLWLDNTENDLNQGDDHGFSPLHWACREGRSAVVEMLIMRGARINVMNRGDDTPLHLAASHGHRDIVQKLLQYKADINAVNEHGNVPLHYACFWGQDQVAEDLVANGALVSICNKYGEMPVDKAKAPLRELLRERAEKMGQNLNRIPYKDTFWKGTTRTRPRNGTLNKHSGIDFKQLNFLAKLNENHSGELWKGRWQGNDIVVKVLKVRDWSTRKSRDFNEECPRLRIFSHPNVLPVLGACQAPPAPHPTLITHWMPYGSLYNVLHEGTNFVVDQSQAVKFALDMARGMAFLHTLEPLIPRHALNSRSVMIDEDMTARISMADVKFSFQCPGRMYAPAWVAPEALQKKPEDTNRRSADMWSFAVLLWELVTREVPFADLSNMEIGMKVALEGLRPTIPPGISPHVCKLMKICMNEDPAKRPKFDMIVPILEKMQDK.

An N-acetylmethionine modification is found at Met-1. ANK repeat units follow at residues Asp-2–Gly-30, Asp-31–Met-63, Asn-64–Val-96, Asn-97–Cys-129, and Asn-130–Arg-174. Residues His-33–Lys-139 are interaction with LIMS1. Position 173 is a phosphothreonine (Thr-173). A PH-like; mediates interaction with TGFB1I1 region spans residues Gly-180–Trp-212. Phosphoserine is present on Ser-186. A Protein kinase domain is found at Leu-193–Leu-446. ATP contacts are provided by Asn-200, Asn-202, His-203, and Ser-204. Ser-246 carries the post-translational modification Phosphoserine. Residues His-270, Met-272, and Asn-279 each contribute to the ATP site. Residue Asp-339 coordinates Mg(2+). Lys-341 serves as a coordination point for ATP. The Nuclear localization signal signature appears at Lys-363 to Arg-371. The residue at position 426 (Lys-426) is an N6-acetyllysine.

The protein belongs to the protein kinase superfamily. TKL Ser/Thr protein kinase family. In terms of assembly, component of the heterotrimeric IPP (ILK-PINCH-PARVIN) complex composed of ILK, LIMS1/PINCH and PARVA; the complex binds to F-actin via the C-terminal tail of LIMS1 and the N-terminal region of PARVA, promoting F-actin filament bundling. Formation of the IPP complex is dependent on protein kinase C and precedes integrin-mediated cell adhesion and spreading. ILK also interacts with LIMS2/PINCH2 and with PARVB and PARVG which may substitute for LIMS1 and PARVA in the IPP complex; PARVA and PARVB compete for the same binding site. Interaction with PARVG promotes the establishment of cell polarity required for leukocyte migration. Interacts with the cytoplasmic domain of integrin ITGB1 and may also interact with integrins ITGB2, ITGB3 and/or ITGB5. Interacts probably also with TGFB1I1. Interacts (via ANK repeats) with EPHA1 (via SAM domain); stimulated by EFNA1 but independent of the kinase activity of EPHA1. Interacts with FERMT2. Interacts with LIMD2; leading to activate the protein kinase activity. Interacts with PXN/PAXILLIN (via LD motif 4). Interacts with CCDC25 (via cytoplasmic region); initiating the ILK-PARVB cascade to induce cytoskeleton rearrangement and directional migration of cells. Interacts with IQGAP1; the interaction is required for localization of IQGAP1 to the cell cortex. In terms of processing, phosphorylation by PAK1 modulates ILK subcellular location by promoting its nuclear export. Highly expressed in lung, heart, kidney, liver, brain, spleen and skeletal muscle. Weakly expressed in testis.

It localises to the cell junction. The protein localises to the focal adhesion. The protein resides in the cell membrane. It is found in the cytoplasm. Its subcellular location is the myofibril. It localises to the sarcomere. The protein localises to the cell projection. The protein resides in the lamellipodium. It is found in the nucleus. Its subcellular location is the cytoskeleton. It localises to the microtubule organizing center. The protein localises to the centrosome. The protein resides in the cell cortex. Scaffold protein which mediates protein-protein interactions during a range of cellular events including focal adhesion assembly, cell adhesion and cell migration. Regulates integrin-mediated signal transduction by contributing to inside-out integrin activation. Recruits PARVA and LIMS1/PITCH to form the heterotrimeric IPP (ILK-PINCH-PARVIN) complex which binds to F-actin via the C-terminal tail of LIMS1 and the N-terminal region of PARVA, promoting F-actin filament bundling, a process required to generate force for actin cytoskeleton reorganization and subsequent dynamic cell adhesion events such as cell spreading and migration. Binding to PARVA promotes effective assembly of ILK into focal adhesions while PARVA-bound ILK can simultaneously engage integrin-beta cytoplasmic tails to mediate cell adhesion. Plays a role with PARVG in promoting the cell adhesion and spreading of leukocytes. Acts as an upstream effector of both AKT1/PKB and GSK3. Mediates trafficking of caveolae to the cell surface in an ITGB1-dependent manner by promoting the recruitment of IQGAP1 to the cell cortex which cooperates with its effector DIAPH1 to locally stabilize microtubules and allow stable insertion of caveolae into the plasma membrane. Required for the maintenance of mitotic spindle integrity by promoting phosphorylation of TACC3 by AURKA. Associates with chromatin and may act as a negative regulator of transcription when located in the nucleus. The chain is Scaffold protein ILK from Mus musculus (Mouse).